A 156-amino-acid chain; its full sequence is Small ribosomal subunit protein uS7 (156 aa).

Belongs to the universal ribosomal protein uS7 family. In terms of assembly, part of the 30S ribosomal subunit. Contacts proteins S9 and S11.

Functionally, one of the primary rRNA binding proteins, it binds directly to 16S rRNA where it nucleates assembly of the head domain of the 30S subunit. Is located at the subunit interface close to the decoding center, probably blocks exit of the E-site tRNA. In Leptothrix cholodnii (strain ATCC 51168 / LMG 8142 / SP-6) (Leptothrix discophora (strain SP-6)), this protein is Small ribosomal subunit protein uS7.